Here is a 700-residue protein sequence, read N- to C-terminus: Elongation factor G (700 aa).

Residues 10–285 (DRTRNIGIMA…AVIDYLPSPL (276 aa)) form the tr-type G domain. GTP is bound by residues 19–26 (AHIDAGKT), 83–87 (DTPGH), and 137–140 (NKMD).

It belongs to the TRAFAC class translation factor GTPase superfamily. Classic translation factor GTPase family. EF-G/EF-2 subfamily.

The protein resides in the cytoplasm. In terms of biological role, catalyzes the GTP-dependent ribosomal translocation step during translation elongation. During this step, the ribosome changes from the pre-translocational (PRE) to the post-translocational (POST) state as the newly formed A-site-bound peptidyl-tRNA and P-site-bound deacylated tRNA move to the P and E sites, respectively. Catalyzes the coordinated movement of the two tRNA molecules, the mRNA and conformational changes in the ribosome. The sequence is that of Elongation factor G from Lacticaseibacillus paracasei (strain ATCC 334 / BCRC 17002 / CCUG 31169 / CIP 107868 / KCTC 3260 / NRRL B-441) (Lactobacillus paracasei).